The primary structure comprises 860 residues: Semaphorin-3aa (860 aa).

The first 17 residues, 1–17 (MDYLVGIFLLLCGVALP), serve as a signal peptide directing secretion. A Sema domain is found at 31-515 (RLKLSYNEML…SDLGISQMPL (485 aa)). A glycan (N-linked (GlcNAc...) asparagine) is linked at asparagine 53. The cysteines at positions 104 and 115 are disulfide-linked. N-linked (GlcNAc...) asparagine glycosylation is present at asparagine 126. 4 disulfide bridges follow: cysteine 133–cysteine 142, cysteine 270–cysteine 382, cysteine 294–cysteine 342, and cysteine 518–cysteine 536. An Ig-like C2-type domain is found at 579–668 (GYSSVEERSV…FIQPLRRINL (90 aa)). N-linked (GlcNAc...) asparagine glycosylation is present at asparagine 593. A disulfide bridge links cysteine 652 with cysteine 717. The tract at residues 725 to 860 (KKPKGKKAPK…HEQQRPPRSV (136 aa)) is disordered. Polar residues-rich tracts occupy residues 748–764 (TPQT…QRAQ) and 782–818 (TGLQ…QPNQ). A compositionally biased stretch (basic and acidic residues) spans 838–860 (QLQENKRGRNRRTHEQQRPPRSV).

Belongs to the semaphorin family.

Its subcellular location is the secreted. Its function is as follows. May influence outgrowth by a variety of growth cones including those of the posterior lateral line ganglion. The protein is Semaphorin-3aa (sema3aa) of Danio rerio (Zebrafish).